A 78-amino-acid chain; its full sequence is MIEETPALPAPVGAGVYNVYTGGPADSALPTAAQLGLEPPRFCAECGRRMIVQVRPDGWWAQCSRHGHVDSTDLDPRR.

It belongs to the BsaP family. Iron-sulfur cluster serves as cofactor.

Required for the activity of the biotin synthase BioB. The chain is Biotin synthase auxiliary protein from Mycolicibacterium smegmatis (strain ATCC 700084 / mc(2)155) (Mycobacterium smegmatis).